A 539-amino-acid chain; its full sequence is GMP synthase [glutamine-hydrolyzing] (539 aa).

The 199-residue stretch at 4–202 folds into the Glutamine amidotransferase type-1 domain; sequence KILILDFGSQ…VLQIAGAKPD (199 aa). Catalysis depends on C81, which acts as the Nucleophile. Active-site residues include H176 and E178. One can recognise a GMPS ATP-PPase domain in the interval 203 to 395; sequence WIMKNHIEEA…LGLPPEMVYR (193 aa). 230-236 contributes to the ATP binding site; the sequence is SGGVDSS.

As to quaternary structure, homodimer.

It carries out the reaction XMP + L-glutamine + ATP + H2O = GMP + L-glutamate + AMP + diphosphate + 2 H(+). Its pathway is purine metabolism; GMP biosynthesis; GMP from XMP (L-Gln route): step 1/1. Its function is as follows. Catalyzes the synthesis of GMP from XMP. This is GMP synthase [glutamine-hydrolyzing] from Burkholderia orbicola (strain AU 1054).